We begin with the raw amino-acid sequence, 63 residues long: Cytochrome c oxidase subunit 7C, mitochondrial (63 aa).

The N-terminal 16 residues, 1–16 (MLGQSIRRFTTSVVRR), are a transit peptide targeting the mitochondrion. Residues 17 to 33 (SHYEEGPGKNLPFSVEN) are Mitochondrial matrix-facing. K25 bears the N6-acetyllysine; alternate mark. Position 25 is an N6-succinyllysine; alternate (K25). Residues 34–60 (KWSLLAKMCLYFGSAFATPFLVVRHQL) traverse the membrane as a helical segment. At 61–63 (LKT) the chain is on the mitochondrial intermembrane side.

It belongs to the cytochrome c oxidase VIIc family. In terms of assembly, component of the cytochrome c oxidase (complex IV, CIV), a multisubunit enzyme composed of 14 subunits. The complex is composed of a catalytic core of 3 subunits MT-CO1, MT-CO2 and MT-CO3, encoded in the mitochondrial DNA, and 11 supernumerary subunits COX4I1 (or COX4I2), COX5A, COX5B, COX6A1 (or COX6A2), COX6B1 (or COX6B2), COX6C, COX7A2 (or COX7A1), COX7B, COX7C, COX8A and NDUFA4, which are encoded in the nuclear genome. The complex exists as a monomer or a dimer and forms supercomplexes (SCs) in the inner mitochondrial membrane with NADH-ubiquinone oxidoreductase (complex I, CI) and ubiquinol-cytochrome c oxidoreductase (cytochrome b-c1 complex, complex III, CIII), resulting in different assemblies (supercomplex SCI(1)III(2)IV(1) and megacomplex MCI(2)III(2)IV(2)). Interacts with RAB5IF.

It localises to the mitochondrion inner membrane. It functions in the pathway energy metabolism; oxidative phosphorylation. Its function is as follows. Component of the cytochrome c oxidase, the last enzyme in the mitochondrial electron transport chain which drives oxidative phosphorylation. The respiratory chain contains 3 multisubunit complexes succinate dehydrogenase (complex II, CII), ubiquinol-cytochrome c oxidoreductase (cytochrome b-c1 complex, complex III, CIII) and cytochrome c oxidase (complex IV, CIV), that cooperate to transfer electrons derived from NADH and succinate to molecular oxygen, creating an electrochemical gradient over the inner membrane that drives transmembrane transport and the ATP synthase. Cytochrome c oxidase is the component of the respiratory chain that catalyzes the reduction of oxygen to water. Electrons originating from reduced cytochrome c in the intermembrane space (IMS) are transferred via the dinuclear copper A center (CU(A)) of subunit 2 and heme A of subunit 1 to the active site in subunit 1, a binuclear center (BNC) formed by heme A3 and copper B (CU(B)). The BNC reduces molecular oxygen to 2 water molecules using 4 electrons from cytochrome c in the IMS and 4 protons from the mitochondrial matrix. This chain is Cytochrome c oxidase subunit 7C, mitochondrial (COX7C), found in Homo sapiens (Human).